A 36-amino-acid polypeptide reads, in one-letter code: Photosystem I reaction center subunit VIII (36 aa).

A helical transmembrane segment spans residues 6 to 28 (LPSIFVPXVGLVFPAIAMASXFL).

It belongs to the PsaI family.

The protein localises to the plastid. It is found in the chloroplast thylakoid membrane. May help in the organization of the PsaL subunit. The sequence is that of Photosystem I reaction center subunit VIII from Acorus gramineus (Dwarf sweet flag).